We begin with the raw amino-acid sequence, 228 residues long: UPF0328 protein ECU07_0040 (228 aa).

The protein belongs to the UPF0328 family.

This is UPF0328 protein ECU07_0040 from Encephalitozoon cuniculi (strain GB-M1) (Microsporidian parasite).